A 342-amino-acid polypeptide reads, in one-letter code: Holliday junction branch migration complex subunit RuvB (342 aa).

The segment at 4–182 is large ATPase domain (RuvB-L); the sequence is TDRLLSAGRR…FGIPIRLQFY (179 aa). ATP-binding residues include leucine 21, arginine 22, glycine 63, lysine 66, threonine 67, threonine 68, arginine 172, tyrosine 182, and arginine 219. Position 67 (threonine 67) interacts with Mg(2+). The segment at 183–253 is small ATPAse domain (RuvB-S); that stretch reads TVEELERVVS…VADQSLNRLE (71 aa). The interval 256 to 342 is head domain (RuvB-H); sequence NLGLDAMDRR…EAGQDGLFDV (87 aa). Residues arginine 292, arginine 311, and arginine 316 each contribute to the DNA site.

It belongs to the RuvB family. Homohexamer. Forms an RuvA(8)-RuvB(12)-Holliday junction (HJ) complex. HJ DNA is sandwiched between 2 RuvA tetramers; dsDNA enters through RuvA and exits via RuvB. An RuvB hexamer assembles on each DNA strand where it exits the tetramer. Each RuvB hexamer is contacted by two RuvA subunits (via domain III) on 2 adjacent RuvB subunits; this complex drives branch migration. In the full resolvosome a probable DNA-RuvA(4)-RuvB(12)-RuvC(2) complex forms which resolves the HJ.

Its subcellular location is the cytoplasm. It catalyses the reaction ATP + H2O = ADP + phosphate + H(+). Its function is as follows. The RuvA-RuvB-RuvC complex processes Holliday junction (HJ) DNA during genetic recombination and DNA repair, while the RuvA-RuvB complex plays an important role in the rescue of blocked DNA replication forks via replication fork reversal (RFR). RuvA specifically binds to HJ cruciform DNA, conferring on it an open structure. The RuvB hexamer acts as an ATP-dependent pump, pulling dsDNA into and through the RuvAB complex. RuvB forms 2 homohexamers on either side of HJ DNA bound by 1 or 2 RuvA tetramers; 4 subunits per hexamer contact DNA at a time. Coordinated motions by a converter formed by DNA-disengaged RuvB subunits stimulates ATP hydrolysis and nucleotide exchange. Immobilization of the converter enables RuvB to convert the ATP-contained energy into a lever motion, pulling 2 nucleotides of DNA out of the RuvA tetramer per ATP hydrolyzed, thus driving DNA branch migration. The RuvB motors rotate together with the DNA substrate, which together with the progressing nucleotide cycle form the mechanistic basis for DNA recombination by continuous HJ branch migration. Branch migration allows RuvC to scan DNA until it finds its consensus sequence, where it cleaves and resolves cruciform DNA. The sequence is that of Holliday junction branch migration complex subunit RuvB from Rhizorhabdus wittichii (strain DSM 6014 / CCUG 31198 / JCM 15750 / NBRC 105917 / EY 4224 / RW1) (Sphingomonas wittichii).